The chain runs to 124 residues: UPF0299 membrane protein VIBHAR_02118 (124 aa).

A run of 4 helical transmembrane segments spans residues 6–26, 35–55, 72–92, and 95–115; these read LLQL…LGIG, VSVP…TLGL, MILL…MLLA, and LPII…LAWF.

The protein belongs to the UPF0299 family.

Its subcellular location is the cell inner membrane. This Vibrio campbellii (strain ATCC BAA-1116) protein is UPF0299 membrane protein VIBHAR_02118.